A 204-amino-acid chain; its full sequence is Flavin-dependent thymidylate synthase (204 aa).

The region spanning 1–204 is the ThyX domain; that stretch reads MTVTLMQHTS…RYLFCLNQEG (204 aa). Residues S50 and 74–76 each bind FAD; that span reads RHR. DUMP contacts are provided by residues 71 to 74, 84 to 86, and K143; these read ELAR and SSR. The short motif at 74–84 is the ThyX motif element; sequence RHRIASLSVKS. Residues 159 to 161 and N165 contribute to the FAD site; that span reads NAR. R170 contacts dUMP. The active-site Involved in ionization of N3 of dUMP, leading to its activation is the R170.

The protein belongs to the thymidylate synthase ThyX family. In terms of assembly, homotetramer. It depends on FAD as a cofactor.

It carries out the reaction dUMP + (6R)-5,10-methylene-5,6,7,8-tetrahydrofolate + NADPH + H(+) = dTMP + (6S)-5,6,7,8-tetrahydrofolate + NADP(+). It functions in the pathway pyrimidine metabolism; dTTP biosynthesis. Its function is as follows. Catalyzes the reductive methylation of 2'-deoxyuridine-5'-monophosphate (dUMP) to 2'-deoxythymidine-5'-monophosphate (dTMP) while utilizing 5,10-methylenetetrahydrofolate (mTHF) as the methyl donor, and NADPH and FADH(2) as the reductant. This Wolinella succinogenes (strain ATCC 29543 / DSM 1740 / CCUG 13145 / JCM 31913 / LMG 7466 / NCTC 11488 / FDC 602W) (Vibrio succinogenes) protein is Flavin-dependent thymidylate synthase.